We begin with the raw amino-acid sequence, 529 residues long: Sodium/hydrogen exchanger 4 (529 aa).

The Cytoplasmic segment spans residues 1 to 19 (MSIGLTEFVTNKLAAEHPQ). Residues 20-40 (VIPISVFIAILCLCLVIGHLL) traverse the membrane as a helical segment. The Vacuolar portion of the chain corresponds to 41–45 (EENRW). The chain crosses the membrane as a helical span at residues 46–66 (VNESITAILVGAASGTVILLI). The Cytoplasmic segment spans residues 67–73 (SKGKSSH). The helical intramembrane region spans 74-94 (ILVFDEELFFIYLLPPIIFNA). Topologically, residues 95-112 (GFQVKKKKFFHNFLTIMS) are cytoplasmic. Residues 113–133 (FGVIGVFISTVIISFGTWWLF) form a helical membrane-spanning segment. The Vacuolar segment spans residues 134-171 (PKLGFKGLSARDYLAIGTIFSSTDTVCTLQILHQDETP). A helical transmembrane segment spans residues 172–192 (LLYSLVFGEGVVNDATSVVLF). The Cytoplasmic portion of the chain corresponds to 193–214 (NAVQKIQFESLTGWTALQVFGN). Residues 215 to 235 (FLYLFSTSTLLGIGVGLITSF) form a helical membrane-spanning segment. Over 236–250 (VLKTLYFGRHSTTRE) the chain is Vacuolar. A helical membrane pass occupies residues 251–267 (LAIMVLMAYLSYMLAEL). Residues 268 to 273 (FSLSGI) lie on the Cytoplasmic side of the membrane. A helical membrane pass occupies residues 274–291 (LTVFFCGVLMSHYASYNV). Topologically, residues 292-301 (TESSRITSRH) are vacuolar. Residues 302–322 (VFAMLSFIAETFIFLYVGTDA) traverse the membrane as a helical segment. Residues 323 to 342 (LDFTKWKTSSLSFGGTLGVS) lie on the Cytoplasmic side of the membrane. The helical transmembrane segment at 343–363 (GVITALVLLGRAAFVFPLSVL) threads the bilayer. At 364 to 380 (TNFMNRHTERNESITFK) the chain is on the vacuolar side. Residue Asn-374 is glycosylated (N-linked (GlcNAc...) asparagine). Residues 381–401 (HQVIIWWAGLMRGAVSIALAF) traverse the membrane as a helical segment. At 402 to 415 (KQFTYSGVTLDPVN) the chain is on the cytoplasmic side. Residues 416 to 436 (AAMVTNTTIVVLFTTLVFGFL) traverse the membrane as a helical segment. Residues 437–529 (TKPLVNYLLP…GPRRENQPEC (93 aa)) are Vacuolar-facing.

Belongs to the monovalent cation:proton antiporter 1 (CPA1) transporter (TC 2.A.36) family. Expressed at very low levels in roots and shoots.

It is found in the vacuole membrane. It carries out the reaction Na(+)(in) + H(+)(out) = Na(+)(out) + H(+)(in). The enzyme catalyses K(+)(in) + H(+)(out) = K(+)(out) + H(+)(in). Functionally, may act in low affinity electroneutral exchange of protons for cations such as Na(+) or K(+) across membranes. May also exchange Li(+) and Cs(+) with a lower affinity. This is Sodium/hydrogen exchanger 4 (NHX4) from Arabidopsis thaliana (Mouse-ear cress).